The sequence spans 120 residues: UPF0231 protein CKO_03249 (120 aa).

This sequence belongs to the UPF0231 family.

This chain is UPF0231 protein CKO_03249, found in Citrobacter koseri (strain ATCC BAA-895 / CDC 4225-83 / SGSC4696).